The chain runs to 223 residues: Ribose-5-phosphate isomerase A (223 aa).

Substrate is bound by residues 26–29 (TGST), 82–85 (DGAD), and 95–98 (KGGG). The active-site Proton acceptor is Glu-104. Lys-122 is a substrate binding site.

It belongs to the ribose 5-phosphate isomerase family. As to quaternary structure, homodimer.

It carries out the reaction aldehydo-D-ribose 5-phosphate = D-ribulose 5-phosphate. The protein operates within carbohydrate degradation; pentose phosphate pathway; D-ribose 5-phosphate from D-ribulose 5-phosphate (non-oxidative stage): step 1/1. In terms of biological role, catalyzes the reversible conversion of ribose-5-phosphate to ribulose 5-phosphate. The chain is Ribose-5-phosphate isomerase A from Streptococcus agalactiae serotype Ia (strain ATCC 27591 / A909 / CDC SS700).